Consider the following 122-residue polypeptide: Large ribosomal subunit protein uL14 (122 aa).

The protein belongs to the universal ribosomal protein uL14 family. Part of the 50S ribosomal subunit. Forms a cluster with proteins L3 and L19. In the 70S ribosome, L14 and L19 interact and together make contacts with the 16S rRNA in bridges B5 and B8.

Functionally, binds to 23S rRNA. Forms part of two intersubunit bridges in the 70S ribosome. The sequence is that of Large ribosomal subunit protein uL14 from Acinetobacter baumannii (strain AB307-0294).